A 98-amino-acid chain; its full sequence is NADH-ubiquinone oxidoreductase chain 4L (98 aa).

Helical transmembrane passes span 1-21, 29-49, and 61-81; these read MSMVYANIFLAFIMSLMGLLM, SLLCLEGMMLSLFVMMTATIL, and IILLVFAACEAALGLSLLVTV.

Belongs to the complex I subunit 4L family. Core subunit of respiratory chain NADH dehydrogenase (Complex I) which is composed of 45 different subunits.

The protein localises to the mitochondrion inner membrane. The catalysed reaction is a ubiquinone + NADH + 5 H(+)(in) = a ubiquinol + NAD(+) + 4 H(+)(out). In terms of biological role, core subunit of the mitochondrial membrane respiratory chain NADH dehydrogenase (Complex I) which catalyzes electron transfer from NADH through the respiratory chain, using ubiquinone as an electron acceptor. Part of the enzyme membrane arm which is embedded in the lipid bilayer and involved in proton translocation. This chain is NADH-ubiquinone oxidoreductase chain 4L (MT-ND4L), found in Pusa caspica (Caspian seal).